The following is a 355-amino-acid chain: GTPase Obg (355 aa).

The Obg domain maps to 1–159; it reads MKFLDEAKVY…KTIWLRLKLI (159 aa). The OBG-type G domain occupies 160–327; that stretch reads ADAGLVGLPN…ALRALRDIIV (168 aa). GTP-binding positions include 166-173, 191-195, 212-215, 279-282, and 308-310; these read GLPNAGKS, FTTLH, DIPG, SQID, and SAA. Mg(2+) contacts are provided by Ser173 and Thr193. Residues 333–355 form a disordered region; the sequence is GDTALPDRSMPHESEVEEEDDRL.

Belongs to the TRAFAC class OBG-HflX-like GTPase superfamily. OBG GTPase family. In terms of assembly, monomer. Mg(2+) serves as cofactor.

It is found in the cytoplasm. In terms of biological role, an essential GTPase which binds GTP, GDP and possibly (p)ppGpp with moderate affinity, with high nucleotide exchange rates and a fairly low GTP hydrolysis rate. Plays a role in control of the cell cycle, stress response, ribosome biogenesis and in those bacteria that undergo differentiation, in morphogenesis control. The sequence is that of GTPase Obg from Agrobacterium fabrum (strain C58 / ATCC 33970) (Agrobacterium tumefaciens (strain C58)).